The primary structure comprises 366 residues: ABI gene family member 3 (366 aa).

Residues 33–61 (CEDNYVQATDKRKALEETMAFTTQALASV) adopt a coiled-coil conformation. The segment at 161–195 (SRTGTLSRKSIKAPATPASATLGRPPRIPEPVHLP) is disordered. Phosphoserine is present on residues Ser213 and Ser216. Positions 215-302 (GSAEGVGGAP…PPPGFGPDEP (88 aa)) are disordered. A compositionally biased stretch (pro residues) spans 232 to 248 (PPAPPLPSSLDPPPPPA). The SH3 domain occupies 308–366 (SYLEKVVTLYPYTSQKDNELSFSEGTVICVTRRYSDGWCEGVSSEGTGFFPGNYVEPSC). A Phosphoserine modification is found at Ser342.

The protein belongs to the ABI family. In terms of assembly, may interact with PAK1 and PAK2. Probably interacts with TARSH. Expressed in heart, lung, liver, pancreas, kidney, placenta and at low levels in brain and skeletal muscle.

Its subcellular location is the cytoplasm. In terms of biological role, may inhibit tumor metastasis. In vitro, reduces cell motility. This is ABI gene family member 3 (ABI3) from Homo sapiens (Human).